Consider the following 102-residue polypeptide: Alpha-hemoglobin-stabilizing protein (102 aa).

This sequence belongs to the AHSP family. As to quaternary structure, monomer. Forms a heterodimer with free alpha-hemoglobin. Does not bind beta-hemoglobin nor alpha(2)beta(2) hemoglobin A. In terms of tissue distribution, expressed in spleen, bone marrow, and blood, with highest levels in bone marrow.

It is found in the cytoplasm. In terms of biological role, acts as a chaperone to prevent the harmful aggregation of alpha-hemoglobin during normal erythroid cell development. Specifically protects free alpha-hemoglobin from precipitation. This is Alpha-hemoglobin-stabilizing protein (Ahsp) from Mus musculus (Mouse).